Reading from the N-terminus, the 720-residue chain is Catalase-peroxidase (720 aa).

The tryptophyl-tyrosyl-methioninium (Trp-Tyr) (with M-248) cross-link spans 94-222; it reads WHAAGTYRIA…LAAVTMGLIY (129 aa). His-95 serves as the catalytic Proton acceptor. The tryptophyl-tyrosyl-methioninium (Tyr-Met) (with W-94) cross-link spans 222–248; sequence YVNPEGVDGNPDPLKTAHDVRVTFARM. A heme b-binding site is contributed by His-263.

This sequence belongs to the peroxidase family. Peroxidase/catalase subfamily. As to quaternary structure, homodimer. It depends on heme b as a cofactor. Post-translationally, formation of the three residue Trp-Tyr-Met cross-link is important for the catalase, but not the peroxidase activity of the enzyme.

It carries out the reaction H2O2 + AH2 = A + 2 H2O. The enzyme catalyses 2 H2O2 = O2 + 2 H2O. In terms of biological role, bifunctional enzyme with both catalase and broad-spectrum peroxidase activity. This chain is Catalase-peroxidase, found in Synechococcus elongatus (strain ATCC 33912 / PCC 7942 / FACHB-805) (Anacystis nidulans R2).